Consider the following 460-residue polypeptide: MPTTPLRKTAMTTRQPIYKSLYFQVIVAIVIGILIGHFYPDTGKALKPLGDGFIKLIKMVIAPIIFCTVVSGIAGMQNMKSVGKTGGYALLYFEIVSTIALLIGLIVVNVVQPGAGMNIDVSTLDASKIAAYVTAGQDQSIVGFILNVIPNTIVGAFANGDILQVLMFSVIFGFALHRLGSYGKPVLDFIDRFAHVMFNIINMIMKLAPIGAFGAMAFTIGAYGVSSLVQLGQLMICFYITCALFVVLVLGAICRAHGFSIFKLVRYIREELLIVLGTSSSESALPRMLIKMERLGAKKSVVGLVIPTGYSFNLDGTSIYLTMAAVFIAQATNTHMDITHQITLLLVLLLSSKGAAGVTGSGFIVLAATLSAVGHLPVAGLALILGIDRFMSEARALTNLVGNAVATVVVAKWVGELDTDKLQSELASGGSAILETRPEDDLGVAEGPTPANAVNTTKTV.

9 helical membrane passes run 20–40, 56–76, 88–108, 153–173, 200–220, 234–254, 301–321, 342–362, and 364–384; these read SLYFQVIVAIVIGILIGHFYP, LIKMVIAPIIFCTVVSGIAGM, YALLYFEIVSTIALLIGLIVV, IVGAFANGDILQVLMFSVIFG, IINMIMKLAPIGAFGAMAFTI, LMICFYITCALFVVLVLGAIC, VVGLVIPTGYSFNLDGTSIYL, ITLLLVLLLSSKGAAGVTGSG, and IVLAATLSAVGHLPVAGLALI. The interval 438–460 is disordered; it reads PEDDLGVAEGPTPANAVNTTKTV.

This sequence belongs to the dicarboxylate/amino acid:cation symporter (DAACS) (TC 2.A.23) family.

The protein resides in the cell inner membrane. In terms of biological role, responsible for the transport of dicarboxylates such as succinate, fumarate, and malate from the periplasm across the membrane. This is C4-dicarboxylate transport protein from Pseudomonas savastanoi pv. phaseolicola (strain 1448A / Race 6) (Pseudomonas syringae pv. phaseolicola (strain 1448A / Race 6)).